Consider the following 124-residue polypeptide: Large ribosomal subunit protein uL18 (124 aa).

Belongs to the universal ribosomal protein uL18 family. As to quaternary structure, part of the 50S ribosomal subunit; part of the 5S rRNA/L5/L18/L25 subcomplex. Contacts the 5S and 23S rRNAs.

Its function is as follows. This is one of the proteins that bind and probably mediate the attachment of the 5S RNA into the large ribosomal subunit, where it forms part of the central protuberance. This Orientia tsutsugamushi (strain Ikeda) (Rickettsia tsutsugamushi) protein is Large ribosomal subunit protein uL18.